A 286-amino-acid polypeptide reads, in one-letter code: NADPH-dependent 7-cyano-7-deazaguanine reductase (286 aa).

Val88–Ser90 lines the substrate pocket. Ser90–Lys91 is a binding site for NADPH. Cys194 serves as the catalytic Thioimide intermediate. Asp201 acts as the Proton donor in catalysis. His233–Glu234 is a binding site for substrate. Arg262–Gly263 is an NADPH binding site.

This sequence belongs to the GTP cyclohydrolase I family. QueF type 2 subfamily. Homodimer.

Its subcellular location is the cytoplasm. It carries out the reaction 7-aminomethyl-7-carbaguanine + 2 NADP(+) = 7-cyano-7-deazaguanine + 2 NADPH + 3 H(+). It functions in the pathway tRNA modification; tRNA-queuosine biosynthesis. Functionally, catalyzes the NADPH-dependent reduction of 7-cyano-7-deazaguanine (preQ0) to 7-aminomethyl-7-deazaguanine (preQ1). In Colwellia psychrerythraea (strain 34H / ATCC BAA-681) (Vibrio psychroerythus), this protein is NADPH-dependent 7-cyano-7-deazaguanine reductase.